The primary structure comprises 260 residues: Indole-3-glycerol phosphate synthase (260 aa).

The protein belongs to the TrpC family.

The catalysed reaction is 1-(2-carboxyphenylamino)-1-deoxy-D-ribulose 5-phosphate + H(+) = (1S,2R)-1-C-(indol-3-yl)glycerol 3-phosphate + CO2 + H2O. The protein operates within amino-acid biosynthesis; L-tryptophan biosynthesis; L-tryptophan from chorismate: step 4/5. The chain is Indole-3-glycerol phosphate synthase from Staphylococcus saprophyticus subsp. saprophyticus (strain ATCC 15305 / DSM 20229 / NCIMB 8711 / NCTC 7292 / S-41).